The primary structure comprises 171 residues: Transcription factor E (171 aa).

The HTH TFE/IIEalpha-type domain occupies tyrosine 5–glutamate 88.

The protein belongs to the TFE family. As to quaternary structure, monomer. Interaction with RNA polymerase subunits RpoF and RpoE is necessary for Tfe stimulatory transcription activity. Able to interact with Tbp and RNA polymerase in the absence of DNA promoter. Interacts both with the preinitiation and elongation complexes.

In terms of biological role, transcription factor that plays a role in the activation of archaeal genes transcribed by RNA polymerase. Facilitates transcription initiation by enhancing TATA-box recognition by TATA-box-binding protein (Tbp), and transcription factor B (Tfb) and RNA polymerase recruitment. Not absolutely required for transcription in vitro, but particularly important in cases where Tbp or Tfb function is not optimal. It dynamically alters the nucleic acid-binding properties of RNA polymerases by stabilizing the initiation complex and destabilizing elongation complexes. Seems to translocate with the RNA polymerase following initiation and acts by binding to the non template strand of the transcription bubble in elongation complexes. This is Transcription factor E from Cenarchaeum symbiosum (strain A).